The sequence spans 348 residues: Phosphoribosylformylglycinamidine cyclo-ligase (348 aa).

The protein belongs to the AIR synthase family.

It localises to the cytoplasm. It catalyses the reaction 2-formamido-N(1)-(5-O-phospho-beta-D-ribosyl)acetamidine + ATP = 5-amino-1-(5-phospho-beta-D-ribosyl)imidazole + ADP + phosphate + H(+). It functions in the pathway purine metabolism; IMP biosynthesis via de novo pathway; 5-amino-1-(5-phospho-D-ribosyl)imidazole from N(2)-formyl-N(1)-(5-phospho-D-ribosyl)glycinamide: step 2/2. The chain is Phosphoribosylformylglycinamidine cyclo-ligase from Cereibacter sphaeroides (strain ATCC 17025 / ATH 2.4.3) (Rhodobacter sphaeroides).